The following is a 191-amino-acid chain: MEYFDMRKMSVNLWRNAAGETREICTFPPAKRDFYWRASIASIAANGEFSLFPGMERIVTLLEGGEMFLESADHFNHTLKPLQPFAFAADQVVKAKLTAGQMSMDFNIMTRLDVCKAKVRIAERTFTTFGSRGGVVFVINGAWQLGDKLLTTDQGACWFDGRHTLRLLQPQGKLLFSEINWLAGHSPDQVQ.

It belongs to the Ves family.

In Escherichia coli O139:H28 (strain E24377A / ETEC), this protein is Protein Ves.